We begin with the raw amino-acid sequence, 311 residues long: HPr kinase/phosphorylase (311 aa).

Residues His138 and Lys159 contribute to the active site. Gly153–Ser160 contacts ATP. Ser160 is a Mg(2+) binding site. Asp177 acts as the Proton acceptor; for phosphorylation activity. Proton donor; for dephosphorylation activity in catalysis. The important for the catalytic mechanism of both phosphorylation and dephosphorylation stretch occupies residues Leu201 to Asn210. Position 202 (Glu202) interacts with Mg(2+). Arg243 is a catalytic residue. An important for the catalytic mechanism of dephosphorylation region spans residues Pro264–Arg269.

It belongs to the HPrK/P family. As to quaternary structure, homohexamer. Requires Mg(2+) as cofactor.

It catalyses the reaction [HPr protein]-L-serine + ATP = [HPr protein]-O-phospho-L-serine + ADP + H(+). The catalysed reaction is [HPr protein]-O-phospho-L-serine + phosphate + H(+) = [HPr protein]-L-serine + diphosphate. In terms of biological role, catalyzes the ATP- as well as the pyrophosphate-dependent phosphorylation of a specific serine residue in HPr, a phosphocarrier protein of the phosphoenolpyruvate-dependent sugar phosphotransferase system (PTS). HprK/P also catalyzes the pyrophosphate-producing, inorganic phosphate-dependent dephosphorylation (phosphorolysis) of seryl-phosphorylated HPr (P-Ser-HPr). The two antagonistic activities of HprK/P are regulated by several intracellular metabolites, which change their concentration in response to the absence or presence of rapidly metabolisable carbon sources (glucose, fructose, etc.) in the growth medium. Also phosphorylates/dephosphorylates the HPr-like catabolite repression protein crh on a specific serine residue. Therefore, by controlling the phosphorylation state of HPr and crh, HPrK/P is a sensor enzyme that plays a major role in the regulation of carbon metabolism and sugar transport: it mediates carbon catabolite repression (CCR), and regulates PTS-catalyzed carbohydrate uptake and inducer exclusion. This Geobacillus sp. (strain WCH70) protein is HPr kinase/phosphorylase.